The sequence spans 296 residues: D-alanine--D-alanine ligase (296 aa).

In terms of domain architecture, ATP-grasp spans 99–292 (TYRVLDGYVN…FEELVDAIIQ (194 aa)). Residue 125-176 (GFPCVIKPRKEGSSIGVHICDNSNQLYNDLSEELKKYNEMMIQRYIEGRELT) participates in ATP binding. 3 residues coordinate Mg(2+): D247, E259, and N261.

The protein belongs to the D-alanine--D-alanine ligase family. Mg(2+) is required as a cofactor. Requires Mn(2+) as cofactor.

The protein localises to the cytoplasm. It carries out the reaction 2 D-alanine + ATP = D-alanyl-D-alanine + ADP + phosphate + H(+). Its pathway is cell wall biogenesis; peptidoglycan biosynthesis. In terms of biological role, cell wall formation. This Pseudothermotoga lettingae (strain ATCC BAA-301 / DSM 14385 / NBRC 107922 / TMO) (Thermotoga lettingae) protein is D-alanine--D-alanine ligase.